A 395-amino-acid chain; its full sequence is Cyclic AMP-responsive element-binding protein 3-like protein 4 (395 aa).

The Cytoplasmic segment spans residues 1-295 (MDLGIPDLLD…QTSNKAAQTS (295 aa)). Residues 82-108 (EASPGSDSGISEDPCHPDSPPAPRATS) are disordered. The region spanning 217 to 280 (VLKKVRRKIR…ISLVAQLRQL (64 aa)) is the bZIP domain. Positions 219 to 248 (KKVRRKIRNKQSAQDSRRRKKEYIDGLESR) are basic motif. The tract at residues 259–280 (LQKKVQELERHNISLVAQLRQL) is leucine-zipper. Residues 296 to 316 (TCVLILLFSLALIILPSFSPF) form a helical; Signal-anchor for type II membrane protein membrane-spanning segment. The Lumenal portion of the chain corresponds to 317–395 (QSRPEAGSED…IRSVLHADEM (79 aa)). The segment at 355 to 395 (RLREPPGAKDANGSTRTLLEKMGGKPRPSGRIRSVLHADEM) is disordered. N-linked (GlcNAc...) asparagine glycosylation is present at N366.

Belongs to the bZIP family. ATF subfamily. As to quaternary structure, binds DNA as a dimer. In terms of processing, N-glycosylated in the C-terminal region. Post-translationally, controlled by regulated intramembrane proteolysis (RIP). Following ER stress a fragment containing the cytoplasmic transcription factor domain is released by proteolysis. The cleavage seems to be performed sequentially by site-1 and site-2 proteases (PS1 and PS2). PS1 cleavage may be suppressed by a determinant in the C-terminal region. According to PubMed:11830526, exclusively expressed in the prostate. Expressed in breast and prostate cancer cell lines. Expressed in prostatic luminal epithelial cells (at protein level). Expression is significantly more abundant in prostate cancer than in benign prostatic tissue (prostatic hyperplasia). According to PubMed:12111373, also expressed in brain, pancreas and skeletal muscle, and at lower levels in small intestine, testis, leukocyte and thymus.

It localises to the endoplasmic reticulum membrane. Its subcellular location is the golgi apparatus membrane. The protein resides in the nucleus. Its function is as follows. Transcriptional activator that may play a role in the unfolded protein response. Binds to the UPR element (UPRE) but not to CRE element. Preferentially binds DNA with to the consensus sequence 5'-T[GT]ACGT[GA][GT]-3' and has transcriptional activation activity from UPRE. Binds to NF-kappa-B site and has transcriptional activation activity from NF-kappa-B-containing regulatory elements. The sequence is that of Cyclic AMP-responsive element-binding protein 3-like protein 4 (CREB3L4) from Homo sapiens (Human).